Consider the following 264-residue polypeptide: Methionine aminopeptidase (264 aa).

Histidine 79 contributes to the substrate binding site. Residues aspartate 97, aspartate 108, and histidine 171 each coordinate a divalent metal cation. Position 178 (histidine 178) interacts with substrate. A divalent metal cation-binding residues include glutamate 204 and glutamate 235.

Belongs to the peptidase M24A family. Methionine aminopeptidase type 1 subfamily. Monomer. Requires Co(2+) as cofactor. The cofactor is Zn(2+). Mn(2+) is required as a cofactor. Fe(2+) serves as cofactor.

It carries out the reaction Release of N-terminal amino acids, preferentially methionine, from peptides and arylamides.. Removes the N-terminal methionine from nascent proteins. The N-terminal methionine is often cleaved when the second residue in the primary sequence is small and uncharged (Met-Ala-, Cys, Gly, Pro, Ser, Thr, or Val). Requires deformylation of the N(alpha)-formylated initiator methionine before it can be hydrolyzed. The chain is Methionine aminopeptidase from Buchnera aphidicola subsp. Acyrthosiphon pisum (strain APS) (Acyrthosiphon pisum symbiotic bacterium).